Reading from the N-terminus, the 256-residue chain is MTVKCNKCKEEINKEDLEKNYYICPLCGKLNRMPAKNRLQMLTEKFDVMFNDQEFTDPIDFPSYKEKYESAREKSGETEGVVCGRGTIGGNDTCIFIMEPNFMMGSMGTVVGDRITALFEYATKNRLPVIGYTVSGGARMQEGALSLMQMAKVSAAAKRHSDAGLLYVVCTTDPTMGGATASFAMLGDIIISEPGAMIGFAGKRVVEQVTGEVLPDNFQSAEFQLKNGFIDDIVPRQEQRAYLANILAIHAETVSA.

The CoA carboxyltransferase N-terminal domain occupies 1–256 (MTVKCNKCKE…LAIHAETVSA (256 aa)). Residues C5, C8, C24, and C27 each coordinate Zn(2+). The segment at 5-27 (CNKCKEEINKEDLEKNYYICPLC) adopts a C4-type zinc-finger fold.

Belongs to the AccD/PCCB family. Acetyl-CoA carboxylase is a heterohexamer composed of biotin carboxyl carrier protein (AccB), biotin carboxylase (AccC) and two subunits each of ACCase subunit alpha (AccA) and ACCase subunit beta (AccD). Zn(2+) serves as cofactor.

Its subcellular location is the cytoplasm. The catalysed reaction is N(6)-carboxybiotinyl-L-lysyl-[protein] + acetyl-CoA = N(6)-biotinyl-L-lysyl-[protein] + malonyl-CoA. It participates in lipid metabolism; malonyl-CoA biosynthesis; malonyl-CoA from acetyl-CoA: step 1/1. Functionally, component of the acetyl coenzyme A carboxylase (ACC) complex. Biotin carboxylase (BC) catalyzes the carboxylation of biotin on its carrier protein (BCCP) and then the CO(2) group is transferred by the transcarboxylase to acetyl-CoA to form malonyl-CoA. This is Acetyl-coenzyme A carboxylase carboxyl transferase subunit beta 2 from Lachnospira eligens (strain ATCC 27750 / DSM 3376 / VPI C15-48 / C15-B4) (Eubacterium eligens).